Reading from the N-terminus, the 226-residue chain is Protein Thf1 (226 aa).

Positions 183–213 form a coiled coil; the sequence is EEKMQKDLDLYRSNLEKMDQLLTVIEEALQA.

This sequence belongs to the THF1 family.

May be involved in photosynthetic membrane biogenesis. This chain is Protein Thf1, found in Gloeothece citriformis (strain PCC 7424) (Cyanothece sp. (strain PCC 7424)).